The chain runs to 280 residues: MQVTFTLVAALAGMASAAVAGERGSFGCATHEPTLEHIEISKKLAEEEATNATLFGLAAAATITVPTYFHVVASSQTVANGYITDKMLSDQLAVMNEDFAPHGISFNLVQTTRTINPTWARDGDELAMKRSLRKGDYGALNLYFLRDIGGAFGYCYFPTTASPGSASYIRDGCTILSSTVPGGSSTNYNLGRTVTHEVGHWFGLYHTFQGGCTGSGDSIADTPAQSSPSSGCPVGRDSCPNQPGVDPIHNYMDYSIDSCYEEFTPNQQTRMYSFFNQYRA.

Residues 1–17 (MQVTFTLVAALAGMASA) form the signal peptide. The N-linked (GlcNAc...) asparagine glycan is linked to Asn-51. His-196 serves as a coordination point for Zn(2+). Residue Glu-197 is part of the active site. Residue His-200 participates in Zn(2+) binding. A disordered region spans residues 217–236 (DSIADTPAQSSPSSGCPVGR). A disulfide bond links Cys-232 and Cys-259.

The protein belongs to the peptidase M43B family.

The protein localises to the secreted. In terms of biological role, secreted metalloproteinase that allows assimilation of proteinaceous substrates. The sequence is that of Extracellular metalloprotease GLRG_06286 from Colletotrichum graminicola (strain M1.001 / M2 / FGSC 10212) (Maize anthracnose fungus).